The sequence spans 136 residues: Large-conductance mechanosensitive channel (136 aa).

A run of 2 helical transmembrane segments spans residues 10–30 and 76–96; these read FAMR…AAFG and GVFI…FMAI.

The protein belongs to the MscL family. As to quaternary structure, homopentamer.

The protein localises to the cell inner membrane. Channel that opens in response to stretch forces in the membrane lipid bilayer. May participate in the regulation of osmotic pressure changes within the cell. The protein is Large-conductance mechanosensitive channel of Escherichia coli O127:H6 (strain E2348/69 / EPEC).